Consider the following 406-residue polypeptide: uncharacterized protein (406 aa).

G2 is lipidated: N-myristoyl glycine; by host. A disordered region spans residues 291-406 (QLESTTEVKP…FQYNKPTYDI (116 aa)). Residues 296 to 310 (TEVKPESTTEVKPES) show a composition bias toward basic and acidic residues. A compositionally biased stretch (polar residues) spans 311 to 323 (TSEVQPESTTEFQ). Low complexity-rich tracts occupy residues 324-333 (PESTTVVEPE), 341-351 (ESTTEFQPEST), and 359-369 (TTEPQVESTTE). Residues 370-406 (FQPESSTEPQVESTVEVQAESMNESSYFQYNKPTYDI) show a composition bias toward polar residues.

This is an uncharacterized protein from Acanthamoeba polyphaga (Amoeba).